Reading from the N-terminus, the 168-residue chain is Cilia- and flagella-associated protein HOATZ (168 aa).

Positions 142–168 (PKDKVPKSKEVLSESGLRDQEEVKALE) are disordered.

The protein belongs to the HOATZ family. Specifically expressed in tissues with motile cilia and flagella, such as brain ependyma, lung, testis, and oviduct but not in whole brain, liver,kidney, spleen, and eyeball.

The protein resides in the cytoplasm. The protein localises to the cell projection. Its subcellular location is the cilium. Functionally, required for motile ciliogenesis and flagellar genesis by mediating the maturation of the glycolytic enzyme ENO4. The chain is Cilia- and flagella-associated protein HOATZ from Mus musculus (Mouse).